The following is a 245-amino-acid chain: Small ribosomal subunit protein uS2 (245 aa).

This sequence belongs to the universal ribosomal protein uS2 family.

The protein is Small ribosomal subunit protein uS2 of Pseudomonas putida (strain ATCC 47054 / DSM 6125 / CFBP 8728 / NCIMB 11950 / KT2440).